A 105-amino-acid chain; its full sequence is U2-lycotoxin-Ls1d (105 aa).

Residues 1-17 (MIKYVLISALLVVAVYS) form the signal peptide. The propeptide occupies 18–41 (FTIEDNEDALLEEAEDELDTEEER). 4 disulfides stabilise this stretch: Cys-51–Cys-67, Cys-58–Cys-97, Cys-60–Cys-83, and Cys-69–Cys-81.

The protein belongs to the neurotoxin 04 (omega-agtx) family. 01 (type I omega-agtx) subfamily. As to expression, expressed by the venom gland.

The protein localises to the secreted. Its function is as follows. Insecticidal to house crickets. It induces an excitatory slow-onset impact that leads to irreversible spastic paralysis. It also modifies human voltage-gated potassium channel Kv1.5/KCNA5. Most likely, it binds to the voltage-sensing domain of the channel, suggesting it does not block the pore but prevents its opening at physiological membrane potentials. The recombinant peptide binds to the channel in an irreversible manner and slows down the hKv1.5 current activation kinetics. It is not toxic to mice, when intracranially injected (at 0.5 ug/g mouse). The polypeptide is U2-lycotoxin-Ls1d (Lycosa singoriensis (Wolf spider)).